Reading from the N-terminus, the 103-residue chain is Large ribosomal subunit protein bL21 (103 aa).

This sequence belongs to the bacterial ribosomal protein bL21 family. In terms of assembly, part of the 50S ribosomal subunit. Contacts protein L20.

Its function is as follows. This protein binds to 23S rRNA in the presence of protein L20. In Verminephrobacter eiseniae (strain EF01-2), this protein is Large ribosomal subunit protein bL21.